A 313-amino-acid chain; its full sequence is UbiA prenyltransferase claS (313 aa).

A run of 2 helical transmembrane segments spans residues 30–52 (FAGTMVLFWPFAWGLTMAARALL) and 57–79 (TFGTILACGFFASCLLHSAGCIW). The NDxxDxxxD motif lies at 81 to 88 (DILDQDFD). Mg(2+)-binding residues include Asp-84 and Asp-88. Transmembrane regions (helical) follow at residues 99–121 (IASGAISNTGALIFMFAHLFILM), 131–148 (AWMIGIISIFPLPGIYPL), and 155–177 (WPQAWLGIALNTGIVMAWAYTTG). The Mg(2+) site is built by Asp-205 and Asp-209. The DxxxD motif lies at 205–209 (DKKDD). Residues 205–209 (DKKDD) carry the YxxxK motif. 3 helical membrane passes run 227–247 (PVLSLFGSIIVGSLLISGILN), 250–270 (ELPYFLVSVGGGGLHLATQLW), and 293–313 (AIVWAGLLLDYAWAVGVGAIM).

The protein belongs to the UbiA prenyltransferase family. Requires Mg(2+) as cofactor.

The protein localises to the membrane. It catalyses the reaction hydroquinone + (2E)-geranyl diphosphate = (2E)-geranylhydroquinone + diphosphate. It functions in the pathway secondary metabolite biosynthesis; terpenoid biosynthesis. Its function is as follows. Prenyltransferase; part of the gene cluster that mediates the biosynthesis of clavilactone A, a meroterpenoid that features a unique benzo-fused ten-membered carbocyclic ring unit with an alpha,beta-epoxy-gamma-lactone moiety, forming an intriguing 10/5/3 tricyclic nested skeleton. ClaR, ClaS and ClaT are sufficient to produce clavilactone A. Within the pathway, claS acts as an atypical UbiA prenyltransferase that transfers geranyl pyrophosphate (GPP) to hydroquinone (HYQ) instead of p-hydroxybenzoic acid (PHB), producing the first intermediate geranylhydroquinone. The cytochrome P450 monooxygenase claR then catalyzes the diradical coupling reaction between the intramolecular hydroquinone and allyl moieties to form the benzo-fused ten-membered carbocyclic ring unit of wigantol. Finally the cytochrome P450 monooxygenase claT exquisitely and stereoselectively assembles the alpha,beta-epoxy-gamma-lactone moiety, producing clavilactone A via arnebinol A. The sequence is that of UbiA prenyltransferase claS from Ampulloclitocybe clavipes (Club foot).